Reading from the N-terminus, the 213-residue chain is tRNA (guanine-N(7)-)-methyltransferase (213 aa).

Residues Glu-44, Glu-69, Asp-96, and Asp-118 each contribute to the S-adenosyl-L-methionine site. Asp-118 is a catalytic residue. Lys-122 contributes to the substrate binding site. The interaction with RNA stretch occupies residues 124-129; the sequence is RHEKRR. Substrate contacts are provided by residues Asp-154 and 191 to 194; that span reads TEYE.

It belongs to the class I-like SAM-binding methyltransferase superfamily. TrmB family. Homodimer.

It carries out the reaction guanosine(46) in tRNA + S-adenosyl-L-methionine = N(7)-methylguanosine(46) in tRNA + S-adenosyl-L-homocysteine. It functions in the pathway tRNA modification; N(7)-methylguanine-tRNA biosynthesis. Functionally, catalyzes the formation of N(7)-methylguanine at position 46 (m7G46) in tRNA. The sequence is that of tRNA (guanine-N(7)-)-methyltransferase from Bacillus subtilis (strain 168).